Here is a 158-residue protein sequence, read N- to C-terminus: uncharacterized protein (158 aa).

The next 3 helical transmembrane spans lie at 45 to 65, 76 to 96, and 106 to 126; these read GIFF…PAVI, LAIG…IFAW, and FILV…VFAL.

The protein to U.parvum UU007, UU041 and UU042.

It is found in the cell membrane. This is an uncharacterized protein from Ureaplasma parvum serovar 3 (strain ATCC 700970).